The following is a 190-amino-acid chain: 3-isopropylmalate dehydratase small subunit (190 aa).

This sequence belongs to the LeuD family. LeuD type 1 subfamily. In terms of assembly, heterodimer of LeuC and LeuD.

The catalysed reaction is (2R,3S)-3-isopropylmalate = (2S)-2-isopropylmalate. The protein operates within amino-acid biosynthesis; L-leucine biosynthesis; L-leucine from 3-methyl-2-oxobutanoate: step 2/4. Its function is as follows. Catalyzes the isomerization between 2-isopropylmalate and 3-isopropylmalate, via the formation of 2-isopropylmaleate. The sequence is that of 3-isopropylmalate dehydratase small subunit from Staphylococcus aureus (strain JH1).